The sequence spans 318 residues: MANTNKRLAVIFGDVTLGLKGPDFHYLFSYQTGGPESLRIQGKEWLYRSPKPTFWRATTDNDRGNQFPLKSGMWLAADQFIACQSITVAIDGQTIPLPIAPENNRYSGRETAQEVTVTYTYQTITTPQTTVEVSYTIQASGKIRVAVTYHGQAGLPSLPVFGLRFVMPTPATRFIYQGLSGETYPDRMAGGIAGEYEVTGLPVTPYLVPQDCGVHMATDWVTIYRQAVLDNCLHEPVETGLKFKMVDQPFAFSCLPYTAEELENATHHSELPAPHRTVLNLLGAVRGVGGIDSWGSDVEVAYQIDATQDRHFEFEISF.

Belongs to the bacterial beta-galactosidase small subunit family. In terms of assembly, heterodimer of a large (LacL) and a small subunit (LacM).

The catalysed reaction is Hydrolysis of terminal non-reducing beta-D-galactose residues in beta-D-galactosides.. Component of a beta-galactosidase. This Latilactobacillus sakei (Lactobacillus sakei) protein is Beta-galactosidase small subunit.